A 289-amino-acid polypeptide reads, in one-letter code: CRISPR system Cms protein Csm4 (289 aa).

This sequence belongs to the CRISPR-associated Csm4 family. As to quaternary structure, probably part of the Csm effector complex, that includes Cas10, Csm2, Csm3, Csm4, Csm5 and mature crRNA. Interacts with Cas10 (csm1).

CRISPR (clustered regularly interspaced short palindromic repeat) is an adaptive immune system that provides protection against mobile genetic elements (viruses, transposable elements and conjugative plasmids). CRISPR clusters contain spacers, sequences complementary to antecedent mobile elements, and target invading nucleic acids. CRISPR clusters are transcribed and processed into CRISPR RNA (crRNA). The type III-A Csm effector complex binds crRNA and acts as a crRNA-guided RNase, DNase and cyclic oligoadenylate synthase; binding of target RNA cognate to the crRNA is required for all activities. Functionally, the subunit probably binds to the 5' handle of the crRNA, helping in discrimination between self- and non-self. In Thermococcus onnurineus (strain NA1), this protein is CRISPR system Cms protein Csm4.